Here is a 101-residue protein sequence, read N- to C-terminus: Feather keratin Cos1-1/Cos1-3/Cos2-1 (101 aa).

Serine 2 carries the N-acetylserine modification.

This sequence belongs to the avian keratin family. In terms of assembly, the avian keratins (F-ker, S-ker, C-ker and B-ker) are a complex mixture of very similar polypeptides.

This chain is Feather keratin Cos1-1/Cos1-3/Cos2-1, found in Columba livia (Rock dove).